The chain runs to 258 residues: UPF0246 protein YaaA (258 aa).

The protein belongs to the UPF0246 family.

The protein is UPF0246 protein YaaA of Shigella flexneri serotype 5b (strain 8401).